The following is a 491-amino-acid chain: Probable cytosol aminopeptidase (491 aa).

Mn(2+) is bound by residues lysine 264 and aspartate 269. The active site involves lysine 276. Positions 287, 346, and 348 each coordinate Mn(2+). Arginine 350 is an active-site residue.

Belongs to the peptidase M17 family. Requires Mn(2+) as cofactor.

It is found in the cytoplasm. The enzyme catalyses Release of an N-terminal amino acid, Xaa-|-Yaa-, in which Xaa is preferably Leu, but may be other amino acids including Pro although not Arg or Lys, and Yaa may be Pro. Amino acid amides and methyl esters are also readily hydrolyzed, but rates on arylamides are exceedingly low.. It carries out the reaction Release of an N-terminal amino acid, preferentially leucine, but not glutamic or aspartic acids.. In terms of biological role, presumably involved in the processing and regular turnover of intracellular proteins. Catalyzes the removal of unsubstituted N-terminal amino acids from various peptides. This chain is Probable cytosol aminopeptidase, found in Xylella fastidiosa (strain Temecula1 / ATCC 700964).